The chain runs to 769 residues: Serine/threonine-protein kinase PLK4 (769 aa).

In terms of domain architecture, Protein kinase spans 14-267; sequence YEVQHLLGKG…LEAVLCHPFM (254 aa). Residues 20 to 28 and Lys-43 contribute to the ATP site; that span reads LGKGGFATV. Catalysis depends on Asp-138, which acts as the Proton acceptor. In terms of domain architecture, Cryptic POLO box 1 (CPB1) spans 381–498; sequence EDRISVPPLN…ARFVGLVKSK (118 aa). Positions 499 to 602 constitute a Cryptic POLO box 2 (CPB2) domain; that stretch reads TPKVTYFSTL…GRRPITDVQP (104 aa). The POLO box domain maps to 660–739; the sequence is PIKRINVPDI…IPNIQLKLKT (80 aa).

The protein belongs to the protein kinase superfamily. Ser/Thr protein kinase family. CDC5/Polo subfamily. Homodimer. Ubiquitinated by the SCF(Slimb) ubiquitin ligase complex; leading to its degradation by the proteasome during interphase and regulating centriole number and ensuring the block to centriole reduplication.

It is found in the cytoplasm. The protein localises to the cytoskeleton. Its subcellular location is the microtubule organizing center. The protein resides in the centrosome. It localises to the centriole. The catalysed reaction is L-seryl-[protein] + ATP = O-phospho-L-seryl-[protein] + ADP + H(+). It carries out the reaction L-threonyl-[protein] + ATP = O-phospho-L-threonyl-[protein] + ADP + H(+). Functionally, serine/threonine-protein kinase that plays a central role in centriole duplication. Able to trigger procentriole formation on the surface of the mother centriole cylinder, using mother centriole as a platform, leading to the recruitment of centriole biogenesis proteins such as sas-6. When overexpressed, it is able to induce centrosome amplification through the simultaneous generation of multiple procentrioles adjoining each parental centriole during S phase. Centrosome amplification following overexpression can initiate tumorigenesis, highlighting the importance of centrosome regulation in cancers. In Drosophila simulans (Fruit fly), this protein is Serine/threonine-protein kinase PLK4 (SAK).